The sequence spans 228 residues: Octanoyltransferase (228 aa).

The 182-residue stretch at 31–212 folds into the BPL/LPL catalytic domain; it reads EETDGILILL…KFEEVFEIKF (182 aa). Substrate contacts are provided by residues 76–83, 143–145, and 156–158; these read RGGKITFH, AIG, and GIA. The active-site Acyl-thioester intermediate is the cysteine 174.

The protein belongs to the LipB family.

Its subcellular location is the cytoplasm. The enzyme catalyses octanoyl-[ACP] + L-lysyl-[protein] = N(6)-octanoyl-L-lysyl-[protein] + holo-[ACP] + H(+). Its pathway is protein modification; protein lipoylation via endogenous pathway; protein N(6)-(lipoyl)lysine from octanoyl-[acyl-carrier-protein]: step 1/2. Catalyzes the transfer of endogenously produced octanoic acid from octanoyl-acyl-carrier-protein onto the lipoyl domains of lipoate-dependent enzymes. Lipoyl-ACP can also act as a substrate although octanoyl-ACP is likely to be the physiological substrate. The sequence is that of Octanoyltransferase from Caldanaerobacter subterraneus subsp. tengcongensis (strain DSM 15242 / JCM 11007 / NBRC 100824 / MB4) (Thermoanaerobacter tengcongensis).